The primary structure comprises 374 residues: Acetylxylan esterase (374 aa).

The signal sequence occupies residues 1 to 22 (MVFSPRLSAFVALVALTNAATA). One can recognise a CBM1 domain in the interval 23 to 57 (VPMYGQCGGSGYTGPTQCDPGLVCVKLNDWYSQCQ). Positions 58–99 (SGGAQPPVTTTSSPPVTVSPPPSTTTVAPPVATGPPAPEIPA) are ser/Thr/Pro-rich linker. Residues 60–86 (GAQPPVTTTSSPPVTVSPPPSTTTVAP) are disordered. Residues 63–73 (PPVTTTSSPPV) show a composition bias toward low complexity. Residues 100–374 (GQLTQLRSFG…EVVAMDFFGL (275 aa)) form a catalytic region. An N-linked (GlcNAc...) asparagine glycan is attached at Asn114. The active-site Charge relay system is the Ser219. Asn320 is a glycosylation site (N-linked (GlcNAc...) asparagine).

Belongs to the carbohydrate esterase 1 (CE1) family. AxeA subfamily. As to quaternary structure, monomer. Glycosylated.

It localises to the secreted. The catalysed reaction is Deacetylation of xylans and xylo-oligosaccharides.. It functions in the pathway glycan degradation; xylan degradation. In terms of biological role, acetylxylan esterase involved in the hydrolysis of xylan, a major structural heterogeneous polysaccharide found in plant biomass representing the second most abundant polysaccharide in the biosphere, after cellulose. Degrades acetylated xylans by cleaving acetyl side groups from the hetero-xylan backbone. This Coprinopsis cinerea (strain Okayama-7 / 130 / ATCC MYA-4618 / FGSC 9003) (Inky cap fungus) protein is Acetylxylan esterase.